A 732-amino-acid chain; its full sequence is Acetophenone carboxylase gamma subunit (732 aa).

It belongs to the HyuA family. As to quaternary structure, acetophenone carboxylase consists of five subunits; a heterooctameric subcomplex of two alpha (Apc1), two beta (Apc2), two gamma (Apc3) and two delta (Apc4) subunits assembles with the epsilon (Apc5) subunit in an unknown stoichiometry. It depends on Mg(2+) as a cofactor. Mn(2+) serves as cofactor.

The protein resides in the cytoplasm. It catalyses the reaction acetophenone + hydrogencarbonate + 2 ATP + H2O = 3-oxo-3-phenylpropanoate + 2 ADP + 2 phosphate + 2 H(+). Inhibited by zinc ions, carbamoylphosphate and beta,gamma-imido-ATP. In terms of biological role, catalyzes the carboxylation of acetophenone to form 3-oxo-3-phenylpropanoate (benzoylacetate) in the anaerobic catabolism of ethylbenzene. Also carboxylates propiophenone at the same rate and 4-acetyl-pyridine at lower rates. In Aromatoleum aromaticum (strain DSM 19018 / LMG 30748 / EbN1) (Azoarcus sp. (strain EbN1)), this protein is Acetophenone carboxylase gamma subunit (apc3).